The sequence spans 443 residues: Differentially expressed in FDCP 8 homolog B (443 aa).

Residues 14 to 49 (HLNPFDKKGGAERHPADSETQPCKDSSTSSPLSVPE) form a disordered region. Basic and acidic residues predominate over residues 17-30 (PFDKKGGAERHPAD). The span at 31-45 (SETQPCKDSSTSSPL) shows a compositional bias: polar residues. Phorbol-ester/DAG-type zinc fingers lie at residues 134–185 (EHRF…TKPC) and 364–424 (IHTT…STSC).

This sequence belongs to the DEF8 family.

In terms of biological role, positively regulates lysosome peripheral distribution and ruffled border formation in osteoclasts. Involved in bone resorption. In Xenopus laevis (African clawed frog), this protein is Differentially expressed in FDCP 8 homolog B (def8-b).